The following is a 658-amino-acid chain: Translin-associated factor X-interacting protein 1 (658 aa).

Coiled-coil stretches lie at residues 144 to 184 (EISL…AEEY) and 230 to 295 (ALKM…LMQL).

Interacts with TSNAX.

The protein resides in the cytoplasm. It localises to the perinuclear region. Possible role in spermatogenesis. In Homo sapiens (Human), this protein is Translin-associated factor X-interacting protein 1.